Here is a 323-residue protein sequence, read N- to C-terminus: Flavone synthase cfoJ (323 aa).

It depends on FMN as a cofactor.

The protein operates within secondary metabolite biosynthesis; flavonoid biosynthesis. In terms of biological role, FMN-dependent oxidoreductase; part of the gene cluster that mediates the biosynthesis of chlorflavonin, a fungal flavonoid with acetolactate synthase inhibitory activity. Within the pathway, cfoJ acts as a flavone synthase (FNS) and catalyzes the formation of a double bond between C2 and C3, converting the flavanone into a flavone. The pathway begins with the PKS-NRPS hybrid synthetase cfoA that uses benzoic acid or p-hydroxybenzoic acid as a starter unit with four rounds of chain elongation using malonyl-CoA to form the chalcone skeleton. Then, a new type of chalcone isomerase, cfoK, catalyzes the conversion of the chalcone into a flavanone by a histidine-mediated oxa-Michael addition mechanism. The desaturation of flavanone to flavone is catalyzed by a new type of flavone synthase, the flavin mononucleotide (FMN)-dependent oxidoreductase cfoJ. Monooxygenases cfoF, cfoG, and P450 cfoH are responsible for the hydroxylation of the flavonoid skeleton at sites C3, C8, and C2', respectively. Like cfoF, the dehydratase cfoI plays also a role in the hydroxylation of position C3. Methyltransferases cfoB, cfoC, and cfoD then catalyze the methylation of C7-OH, C8-OH, and C3-OH, respectively. Finally, the monooxygenase cfoE is responsible for the chlorination of flavonoid at position C3'. The sequence is that of Flavone synthase cfoJ from Aspergillus candidus.